A 378-amino-acid chain; its full sequence is D-galactarolactone cycloisomerase (378 aa).

Mg(2+)-binding residues include D194, E220, and E246. H296 acts as the Proton acceptor in catalysis.

This sequence belongs to the mandelate racemase/muconate lactonizing enzyme family. In terms of assembly, homooctamer. Requires Mg(2+) as cofactor.

It carries out the reaction D-glucaro-1,4-lactone = 5-dehydro-4-deoxy-D-glucarate + H(+). It catalyses the reaction D-galactaro-1,4-lactone = 5-dehydro-4-deoxy-D-glucarate + H(+). It functions in the pathway carbohydrate acid metabolism; D-galacturonate degradation via prokaryotic oxidative pathway. In terms of biological role, catalyzes the ring opening of D-galactaro-1,4-lactone to yield 5-keto-4-deoxy-D-glucarate (KDG) via a beta-elimination reaction. This is a step in the oxidative degradation pathway of D-galacturonate, which allows A.tumefaciens to utilize D-galacturonate as a sole carbon source. To a lesser extent, can also use D-glucaro-1,4-lactone as substrate to produce KDG, but cannot use D-galactaro-1,5-lactone, D-glucaro-6,3-lactone and linear D-glucarate. The polypeptide is D-galactarolactone cycloisomerase (gci) (Agrobacterium fabrum (strain C58 / ATCC 33970) (Agrobacterium tumefaciens (strain C58))).